A 515-amino-acid chain; its full sequence is Bifunctional purine biosynthesis protein PurH (515 aa).

The region spanning 1 to 145 is the MGS-like domain; it reads MTKRVLISVS…KNHASVTVVV (145 aa).

This sequence belongs to the PurH family.

The enzyme catalyses (6R)-10-formyltetrahydrofolate + 5-amino-1-(5-phospho-beta-D-ribosyl)imidazole-4-carboxamide = 5-formamido-1-(5-phospho-D-ribosyl)imidazole-4-carboxamide + (6S)-5,6,7,8-tetrahydrofolate. The catalysed reaction is IMP + H2O = 5-formamido-1-(5-phospho-D-ribosyl)imidazole-4-carboxamide. It functions in the pathway purine metabolism; IMP biosynthesis via de novo pathway; 5-formamido-1-(5-phospho-D-ribosyl)imidazole-4-carboxamide from 5-amino-1-(5-phospho-D-ribosyl)imidazole-4-carboxamide (10-formyl THF route): step 1/1. It participates in purine metabolism; IMP biosynthesis via de novo pathway; IMP from 5-formamido-1-(5-phospho-D-ribosyl)imidazole-4-carboxamide: step 1/1. This Streptococcus pneumoniae (strain Taiwan19F-14) protein is Bifunctional purine biosynthesis protein PurH.